The chain runs to 1336 residues: Aldehyde oxidase 4 (1336 aa).

The 2Fe-2S ferredoxin-type domain maps to 8 to 95; that stretch reads DELIFFVNGK…GAAITTVEGV (88 aa). Residues Cys-47, Cys-52, Cys-55, and Cys-77 each coordinate [2Fe-2S] cluster. Residue Gln-116 participates in Mo-molybdopterin binding. [2Fe-2S] cluster contacts are provided by Cys-117, Cys-120, Cys-152, and Cys-154. Position 154 (Cys-154) interacts with Mo-molybdopterin. Positions 237–423 constitute an FAD-binding PCMH-type domain; it reads FQGKRTTWII…LSIFIPYTAQ (187 aa). FAD-binding positions include 265–272, Ala-346, Thr-355, His-359, Asp-368, and Ile-413; that span reads LVMGNTTV. Mo-molybdopterin is bound by residues 804–805, Leu-1045, 1086–1089, Gln-1201, and Leu-1265; these read AF and GSMG. The active-site Proton acceptor; for azaheterocycle hydroxylase activity is the Glu-1267.

Belongs to the xanthine dehydrogenase family. As to quaternary structure, homodimer. Requires [2Fe-2S] cluster as cofactor. It depends on FAD as a cofactor. Mo-molybdopterin serves as cofactor. As to expression, highly expressed in Harderian glands and sebaceous glands with detectable levels in the epidermis and other keratinized epithelia (at protein level). Detected in testis. The expression is 3 times greater in females than in males.

The protein resides in the cytoplasm. The enzyme catalyses an aldehyde + O2 + H2O = a carboxylate + H2O2 + H(+). It catalyses the reaction retinal + O2 + H2O = retinoate + H2O2 + H(+). It carries out the reaction all-trans-retinal + O2 + H2O = all-trans-retinoate + H2O2 + H(+). Functionally, aldehyde oxidase able to catalyze the oxidation of retinaldehyde into retinoate. Is responsible for the major all-trans-retinaldehyde-metabolizing activity in the Harderian gland, and contributes a significant amount of the same activity in the skin. Is devoid of pyridoxal-oxidizing activity, in contrast to the other aldehyde oxidases. Acts as a negative modulator of the epidermal trophism. May be able to oxidize a wide variety of aldehydes into their corresponding carboxylates and to hydroxylate azaheterocycles. The protein is Aldehyde oxidase 4 (Aox4) of Mus musculus (Mouse).